Consider the following 709-residue polypeptide: DNA helicase/primase complex-associated protein (709 aa).

The disordered stretch occupies residues 141 to 176 (SGDDGRDQQPPPVDGFGSEMEGEQTCPHAQRHSESP).

This sequence belongs to the herpesviridae HEPA family. In terms of assembly, associates with the primase and the helicase to form the helicase-primase complex. Interacts with the origin-binding protein. Interacts with the polymerase catalytic subunit.

It localises to the host nucleus. Its function is as follows. Component of the helicase/primase complex. Unwinds the DNA at the replication forks and generates single-stranded DNA for both leading and lagging strand synthesis. The primase synthesizes short RNA primers on the lagging strand that the polymerase presumably elongates using dNTPs. The primase-associated factor has no known catalytic activity in the complex and may serve to facilitate the formation of the replisome by directly interacting with the origin-binding protein and the polymerase. The chain is DNA helicase/primase complex-associated protein from Epstein-Barr virus (strain B95-8) (HHV-4).